We begin with the raw amino-acid sequence, 622 residues long: Dehydrogenase mpl7 (622 aa).

FAD is bound by residues 23 to 24, 44 to 45, and 102 to 105; these read TA, EA, and NFMS. The active-site Proton acceptor is His-554. FAD-binding positions include Ala-582 and 593 to 594; that span reads IM.

This sequence belongs to the GMC oxidoreductase family. As to quaternary structure, homodimer. FAD serves as cofactor.

It functions in the pathway mycotoxin biosynthesis. Functionally, dehydrogenase; part of the gene cluster that mediates the biosynthesis of the mycotoxin citrinin, a hepato-nephrotoxic compound to humans due to inhibition of respiration complex III. The pathway begins with the synthesis of a keto-aldehyde intermediate by the citrinin PKS (pksCT) from successive condensations of 4 malonyl-CoA units, presumably with a simple acetyl-CoA starter unit. Release of the keto-aldehyde intermediate is consistent with the presence of the C-terminal reductive release domain. Mp11 collaborates with pksCT by catalyzing the hydrolysis of ACP-bound acyl intermediates to free the ACP from stalled intermediates. Mpl2 then catalyzes the oxidation of the C-12 methyl of the ketone intermediate to an alcohol intermediate which is further oxidized by the oxidoreductase mpl7 to produce a bisaldehyde intermediate. The fourth catalytic step is catalyzed by the mpl4 aldehyde dehydrogenase. The final transformation is the reduction of C-3 by mpl6 to provide the chemically stable citrinin nucleus. The sequence is that of Dehydrogenase mpl7 from Monascus purpureus (Red mold).